The primary structure comprises 55 residues: Large ribosomal subunit protein bL33 (55 aa).

The protein belongs to the bacterial ribosomal protein bL33 family.

The protein is Large ribosomal subunit protein bL33 of Dehalococcoides mccartyi (strain ATCC BAA-2100 / JCM 16839 / KCTC 5957 / BAV1).